We begin with the raw amino-acid sequence, 111 residues long: Cytochrome b-c1 complex subunit 7 (111 aa).

Ala2 carries the post-translational modification N-acetylalanine. Lys12 carries the post-translational modification N6-acetyllysine; alternate. Lys12 bears the N6-succinyllysine; alternate mark. Lys19 is subject to N6-acetyllysine. Lys78 carries the N6-acetyllysine; alternate modification. The residue at position 78 (Lys78) is an N6-succinyllysine; alternate. An N6-acetyllysine mark is found at Lys83 and Lys96.

The protein belongs to the UQCRB/QCR7 family. Component of the ubiquinol-cytochrome c oxidoreductase (cytochrome b-c1 complex, complex III, CIII), a multisubunit enzyme composed of 11 subunits. The complex is composed of 3 respiratory subunits cytochrome b, cytochrome c1 and Rieske protein UQCRFS1, 2 core protein subunits UQCRC1/QCR1 and UQCRC2/QCR2, and 6 low-molecular weight protein subunits UQCRH/QCR6, UQCRB/QCR7, UQCRQ/QCR8, UQCR10/QCR9, UQCR11/QCR10 and subunit 9, the cleavage product of Rieske protein UQCRFS1. The complex exists as an obligatory dimer and forms supercomplexes (SCs) in the inner mitochondrial membrane with NADH-ubiquinone oxidoreductase (complex I, CI) and cytochrome c oxidase (complex IV, CIV), resulting in different assemblies (supercomplex SCI(1)III(2)IV(1) and megacomplex MCI(2)III(2)IV(2)).

Its subcellular location is the mitochondrion inner membrane. In terms of biological role, component of the ubiquinol-cytochrome c oxidoreductase, a multisubunit transmembrane complex that is part of the mitochondrial electron transport chain which drives oxidative phosphorylation. The respiratory chain contains 3 multisubunit complexes succinate dehydrogenase (complex II, CII), ubiquinol-cytochrome c oxidoreductase (cytochrome b-c1 complex, complex III, CIII) and cytochrome c oxidase (complex IV, CIV), that cooperate to transfer electrons derived from NADH and succinate to molecular oxygen, creating an electrochemical gradient over the inner membrane that drives transmembrane transport and the ATP synthase. The cytochrome b-c1 complex catalyzes electron transfer from ubiquinol to cytochrome c, linking this redox reaction to translocation of protons across the mitochondrial inner membrane, with protons being carried across the membrane as hydrogens on the quinol. In the process called Q cycle, 2 protons are consumed from the matrix, 4 protons are released into the intermembrane space and 2 electrons are passed to cytochrome c. The polypeptide is Cytochrome b-c1 complex subunit 7 (UQCRB) (Homo sapiens (Human)).